Consider the following 73-residue polypeptide: Venom peptide La1 (73 aa).

Lys-73 carries the post-translational modification Lysine amide.

Belongs to the scorpion La1-like peptide family. Post-translationally, contains 4 disulfide bonds. In terms of tissue distribution, expressed by the venom gland.

The protein resides in the secreted. Functionally, not toxic to insect. The polypeptide is Venom peptide La1 (Liocheles australasiae (Dwarf wood scorpion)).